The following is a 344-amino-acid chain: N-acetyl-gamma-glutamyl-phosphate reductase (344 aa).

The active site involves C150.

This sequence belongs to the NAGSA dehydrogenase family. Type 1 subfamily.

Its subcellular location is the cytoplasm. The enzyme catalyses N-acetyl-L-glutamate 5-semialdehyde + phosphate + NADP(+) = N-acetyl-L-glutamyl 5-phosphate + NADPH + H(+). It functions in the pathway amino-acid biosynthesis; L-arginine biosynthesis; N(2)-acetyl-L-ornithine from L-glutamate: step 3/4. Catalyzes the NADPH-dependent reduction of N-acetyl-5-glutamyl phosphate to yield N-acetyl-L-glutamate 5-semialdehyde. This is N-acetyl-gamma-glutamyl-phosphate reductase from Pseudomonas aeruginosa (strain UCBPP-PA14).